The following is a 452-amino-acid chain: GTPase Der (452 aa).

EngA-type G domains follow at residues 4–169 (PIVA…PTTE) and 177–352 (IKVA…ASHR). GTP is bound by residues 10–17 (GRPNVGKS), 57–61 (DTGGL), 120–123 (NKCE), 183–190 (GRPNVGKS), 230–234 (DTAGI), and 295–298 (NKWD). The KH-like domain maps to 353 to 438 (RRVSTAVINE…PIRLIWRGKS (86 aa)).

This sequence belongs to the TRAFAC class TrmE-Era-EngA-EngB-Septin-like GTPase superfamily. EngA (Der) GTPase family. In terms of assembly, associates with the 50S ribosomal subunit.

In terms of biological role, GTPase that plays an essential role in the late steps of ribosome biogenesis. The polypeptide is GTPase Der (Gloeothece citriformis (strain PCC 7424) (Cyanothece sp. (strain PCC 7424))).